We begin with the raw amino-acid sequence, 122 residues long: Yop proteins translocation protein X (122 aa).

Residues 71 to 87 are a coiled coil; it reads HRAQDYRRELDTLQSLL.

Interacts with YscY.

It is found in the secreted. In terms of biological role, required for Yop secretion. This Yersinia enterocolitica serotype O:8 / biotype 1B (strain NCTC 13174 / 8081) protein is Yop proteins translocation protein X (yscX).